Here is a 1245-residue protein sequence, read N- to C-terminus: Probable tail spike protein (1245 aa).

In terms of domain architecture, Peptidase S74 spans 1105-1245 (SDVHYKMDIV…EARLQALEEK (141 aa)).

Proteolytic cleavage and release of the chaperone in the host cytosol stabilizes the folded protein. The cleavage gives rise to the mature tail spike protein but is not essential for catalytic activity.

It localises to the virion. Functionally, functions as a receptor binding protein (RBP) and probably mediates the attachment to the host capsular exopolysaccharides. Displays a depolymerase activity that specifically degrades the KN2-type polysaccharides of Klebsiella pneumoniae capsule. Its function is as follows. The C-terminal chaperone protein mediates homotrimerization and proper folding of the catalytic trimer. This Klebsiella (Taipeivirus 0507KN21) protein is Probable tail spike protein.